A 274-amino-acid polypeptide reads, in one-letter code: Large ribosomal subunit protein uL2cz/uL2cy (274 aa).

2 disordered regions span residues 1–22 (MAIN…DSQV) and 224–274 (NPVD…RRSK).

The protein belongs to the universal ribosomal protein uL2 family. Part of the 50S ribosomal subunit.

The protein localises to the plastid. Its subcellular location is the chloroplast. The protein is Large ribosomal subunit protein uL2cz/uL2cy (rpl2-A) of Helianthus annuus (Common sunflower).